A 490-amino-acid polypeptide reads, in one-letter code: Katanin p60 ATPase-containing subunit A-like 1 (490 aa).

Met-1 is modified (N-acetylmethionine). Positions 87–182 (SCQDEPVRDP…ASDGEIPKFD (96 aa)) are disordered. Over residues 116-127 (SNREVRPLRKDM) the composition is skewed to basic and acidic residues. Residues 128–139 (AGVGARGPVGRA) are compositionally biased toward low complexity. Residues 143-169 (SKSEKPSTSRDKDNRARGKDDKGRKNM) are compositionally biased toward basic and acidic residues. Residue Ser-174 is modified to Phosphoserine. Position 248 to 255 (248 to 255 (GPPGTGKT)) interacts with ATP.

The protein belongs to the AAA ATPase family. Katanin p60 subunit A1 subfamily. A-like 1 sub-subfamily. In terms of assembly, interacts with KATNB1 and KATNBL1.

Its subcellular location is the cytoplasm. The protein localises to the cytoskeleton. It localises to the spindle pole. The protein resides in the spindle. It carries out the reaction n ATP + n H2O + a microtubule = n ADP + n phosphate + (n+1) alpha/beta tubulin heterodimers.. Functionally, regulates microtubule dynamics in Sertoli cells, a process that is essential for spermiogenesis and male fertility. Severs microtubules in an ATP-dependent manner, promoting rapid reorganization of cellular microtubule arrays. Has microtubule-severing activity in vitro. The polypeptide is Katanin p60 ATPase-containing subunit A-like 1 (Otolemur garnettii (Small-eared galago)).